Consider the following 285-residue polypeptide: Protein pxr1 (285 aa).

The segment covering 1–11 (MGLAAPRKKIK) has biased composition (basic residues). Residues 1–23 (MGLAAPRKKIKISHDPNNTNWSR) are disordered. Residues 25 to 79 (TSGFGHKILSSQGWTPGSFLGARNAAHAEMFTAASASHIKVVLKDDTLGLGARPK) enclose the G-patch domain. Residues 144–263 (TPIVTEEPQG…MGRHVFRGRH (120 aa)) are disordered. Residues 152–163 (QGIHKDKQEDKL) show a composition bias toward basic and acidic residues. Residues 190-208 (KKKKSKSKNHREKKDRKRK) show a composition bias toward basic residues. Positions 224–234 (RSTEKKSKATR) are enriched in basic and acidic residues. Basic residues predominate over residues 254–263 (MGRHVFRGRH).

It belongs to the PINX1 family.

It is found in the nucleus. The protein localises to the nucleolus. Functionally, involved in rRNA-processing at A0, A1 and A2 sites and negatively regulates telomerase. The polypeptide is Protein pxr1 (pxr1) (Aspergillus niger (strain ATCC MYA-4892 / CBS 513.88 / FGSC A1513)).